The chain runs to 342 residues: Keratin-associated protein 29-1 (342 aa).

A run of 5 repeats spans residues 5–9 (CCPEN), 91–95 (CCASD), 239–243 (CCVPP), 309–313 (CCVTG), and 324–328 (CCPPT). The segment at 5 to 328 (CCPENPTAVP…SSGPGCCPPT (324 aa)) is 5 X 5 AA repeats of C-C-X(3).

It belongs to the KRTAP type 10 family.

The protein is Keratin-associated protein 29-1 (Krtap29-1) of Mus musculus (Mouse).